The chain runs to 298 residues: Small ribosomal subunit biogenesis GTPase RsgA (298 aa).

One can recognise a CP-type G domain in the interval 67 to 228 (TNELIRPPIC…VADTPGFSSL (162 aa)). Position 116 to 119 (116 to 119 (TKMD)) interacts with GTP. Thr-166 carries the phosphothreonine modification. Position 171–179 (171–179 (GQSGVGKSS)) interacts with GTP. Zn(2+)-binding residues include Cys-252, Cys-257, His-259, and Cys-265.

The protein belongs to the TRAFAC class YlqF/YawG GTPase family. RsgA subfamily. In terms of assembly, monomer, but able to form dimers. Associates with 30S ribosomal subunit; a phospho-mimetic mutation increases association. Probably binds 16S rRNA. Zn(2+) serves as cofactor. Post-translationally, in vitro phosphorylated mostly on Thr (with lower signal on Ser) by PrkC in the presence of poly-L-Lys or myelin basic protein, dephosphorylated by PrpC. Most in vitro phosphorylation occurs on Thr-166, in vivo phosphorylation has not been detected, but it might vary during the cell cycle.

It localises to the cytoplasm. One of several proteins that assist in the late maturation steps of the functional core of the 30S ribosomal subunit. Helps release RbfA from mature subunits. May play a role in the assembly of ribosomal proteins into the subunit. Circularly permuted GTPase with a low level of activity and slow catalytic turnover, does not act on ATP. GTPase activity is stimulated by the presence of 30S or 70S ribosomes, phosphorylation increases stimulation. Depletion results in increased sensitivity to protein synthesis inhibitors that block the peptide channel or peptidyl transferase center on the ribosome, suggesting this protein functions in conjunction with the ribosome in vivo. Decreasing levels of protein lead to an increase in free 30S and 50S ribosomal subunits and a decrease in assembled 70S ribosomes. Suggested to serve as a specific transcription factor for proteins involved in late stages of peptidoglycan synthesis. This chain is Small ribosomal subunit biogenesis GTPase RsgA, found in Bacillus subtilis (strain 168).